Consider the following 312-residue polypeptide: Ribosomal protein L11 methyltransferase (312 aa).

S-adenosyl-L-methionine contacts are provided by Thr-162, Gly-183, Asp-205, and Asn-248.

This sequence belongs to the methyltransferase superfamily. PrmA family.

The protein resides in the cytoplasm. The catalysed reaction is L-lysyl-[protein] + 3 S-adenosyl-L-methionine = N(6),N(6),N(6)-trimethyl-L-lysyl-[protein] + 3 S-adenosyl-L-homocysteine + 3 H(+). In terms of biological role, methylates ribosomal protein L11. This chain is Ribosomal protein L11 methyltransferase, found in Bacillus anthracis (strain A0248).